The chain runs to 834 residues: DNA gyrase subunit A (834 aa).

A Topo IIA-type catalytic domain is found at 53–520 (LPDVRDGLKP…NDTEIDEEDL (468 aa)). Tyrosine 141 (O-(5'-phospho-DNA)-tyrosine intermediate) is an active-site residue. The GyrA-box motif lies at 547–553 (QGRGGVG).

This sequence belongs to the type II topoisomerase GyrA/ParC subunit family. In terms of assembly, heterotetramer, composed of two GyrA and two GyrB chains. In the heterotetramer, GyrA contains the active site tyrosine that forms a transient covalent intermediate with DNA, while GyrB binds cofactors and catalyzes ATP hydrolysis.

It is found in the cytoplasm. The catalysed reaction is ATP-dependent breakage, passage and rejoining of double-stranded DNA.. A type II topoisomerase that negatively supercoils closed circular double-stranded (ds) DNA in an ATP-dependent manner to modulate DNA topology and maintain chromosomes in an underwound state. Negative supercoiling favors strand separation, and DNA replication, transcription, recombination and repair, all of which involve strand separation. Also able to catalyze the interconversion of other topological isomers of dsDNA rings, including catenanes and knotted rings. Type II topoisomerases break and join 2 DNA strands simultaneously in an ATP-dependent manner. This Brachyspira hyodysenteriae (strain ATCC 49526 / WA1) protein is DNA gyrase subunit A.